A 101-amino-acid chain; its full sequence is B3 domain-containing protein At1g08985 (101 aa).

The TF-B3 DNA-binding region spans 7–101 (IVKTLSETDC…WQNTKFIFSM (95 aa)).

The protein localises to the nucleus. The chain is B3 domain-containing protein At1g08985 from Arabidopsis thaliana (Mouse-ear cress).